The following is a 39-amino-acid chain: Cytochrome b6-f complex subunit 5 (39 aa).

Residues 5-25 traverse the membrane as a helical segment; it reads LLCGIVLGLVPITLLGLFVSA.

This sequence belongs to the PetG family. In terms of assembly, the 4 large subunits of the cytochrome b6-f complex are cytochrome b6, subunit IV (17 kDa polypeptide, PetD), cytochrome f and the Rieske protein, while the 4 small subunits are PetG, PetL, PetM and PetN. The complex functions as a dimer.

It is found in the cellular thylakoid membrane. In terms of biological role, component of the cytochrome b6-f complex, which mediates electron transfer between photosystem II (PSII) and photosystem I (PSI), cyclic electron flow around PSI, and state transitions. PetG is required for either the stability or assembly of the cytochrome b6-f complex. The sequence is that of Cytochrome b6-f complex subunit 5 from Prochlorococcus marinus (strain MIT 9301).